The following is a 926-amino-acid chain: Protein O-mannosyl-transferase Tmtc3 (926 aa).

A disordered region spans residues 1-26 (MSTNPNPGIHQYAPSTLPREREREGA). The Cytoplasmic portion of the chain corresponds to 1-36 (MSTNPNPGIHQYAPSTLPREREREGATNSPQRNLLE). A helical membrane pass occupies residues 37-57 (FLCICVACIVCYYNSTQCGLV). Residues 58–114 (FDDISAIRDNKDLRPHTPLINVFLNDFWGTPMRKEQSHKSYRPLTVLTFRFNYLLHA) are Extracellular-facing. The helical transmembrane segment at 115 to 135 (LEPFGYHLVNLLLHLSVCLLW) threads the bilayer. Residues 136–169 (RRVCRLLLRQCAASGSNAISAPSSSSVSQLNTCA) are Cytoplasmic-facing. The helical transmembrane segment at 170–190 (FVASLLFAVHPVHTEAVTGVV) threads the bilayer. Over 191 to 192 (GR) the chain is Extracellular. The chain crosses the membrane as a helical span at residues 193–213 (AELLSSICFLAAFLSYAKSVG). Residues 214-222 (DSGCPRRTN) are Cytoplasmic-facing. 2 helical membrane passes run 223-239 (WLTL…ASML) and 240-259 (CKEQ…LFVV). Residues 260 to 303 (HQLRPLHLCHFVLRLFDERTEQQSPKLANPSGIRRWSSSTLWKR) lie on the Cytoplasmic side of the membrane. Residues 304 to 324 (LSFLVGITLTLLVGRVYVMGS) traverse the membrane as a helical segment. Topologically, residues 325–345 (QLPIFTRFDNPASAADTPERQ) are extracellular. A helical membrane pass occupies residues 346–366 (LTYGYLIYLNCWLLLCPSLLC). The Cytoplasmic segment spans residues 367 to 384 (CDWTMGTVPLLQGFTDSR). Residues 385 to 405 (NITTLLTFLALGAMVAKTCFT) traverse the membrane as a helical segment. Topologically, residues 406–419 (RNLALSRTLIMCLG) are extracellular. A helical membrane pass occupies residues 420–440 (WMVLPFLPASNLFFPVGFVVA). The Cytoplasmic portion of the chain corresponds to 441-442 (ER). Residues 443 to 463 (ILYMPSMGYCLLVAYGFEQLQ) form a helical membrane-spanning segment. Residues 464 to 926 (RRGSLSWQRF…RPTHKSRKRS (463 aa)) are Extracellular-facing. TPR repeat units follow at residues 514-547 (AKLY…QTDD), 548-581 (IGAH…FPQA), 596-630 (LNVF…RSDY), 631-664 (VQAY…DNEN), 665-698 (ADIY…YPEH), 736-769 (EKVY…KADF), 770-803 (RSAL…HPSH), 805-838 (KGLI…DPHN), and 839-872 (TQGL…APAE). 2 N-linked (GlcNAc...) asparagine glycosylation sites follow: asparagine 609 and asparagine 645.

The protein belongs to the TMTC family.

Its subcellular location is the membrane. It is found in the endoplasmic reticulum. It catalyses the reaction a di-trans,poly-cis-dolichyl beta-D-mannosyl phosphate + L-seryl-[protein] = 3-O-(alpha-D-mannosyl)-L-seryl-[protein] + a di-trans,poly-cis-dolichyl phosphate + H(+). The catalysed reaction is a di-trans,poly-cis-dolichyl beta-D-mannosyl phosphate + L-threonyl-[protein] = 3-O-(alpha-D-mannosyl)-L-threonyl-[protein] + a di-trans,poly-cis-dolichyl phosphate + H(+). It participates in protein modification; protein glycosylation. In terms of biological role, transfers mannosyl residues to the hydroxyl group of serine or threonine residues. The sequence is that of Protein O-mannosyl-transferase Tmtc3 from Drosophila melanogaster (Fruit fly).